The following is a 308-amino-acid chain: GMP synthase [glutamine-hydrolyzing] subunit B (308 aa).

Positions 1-185 (MNWEKFVEEK…LGLPEKIYNR (185 aa)) constitute a GMPS ATP-PPase domain. 28-34 (SGGVDSS) contributes to the ATP binding site.

As to quaternary structure, heterodimer composed of a glutamine amidotransferase subunit (A) and a GMP-binding subunit (B).

It catalyses the reaction XMP + L-glutamine + ATP + H2O = GMP + L-glutamate + AMP + diphosphate + 2 H(+). The protein operates within purine metabolism; GMP biosynthesis; GMP from XMP (L-Gln route): step 1/1. Functionally, catalyzes the synthesis of GMP from XMP. The chain is GMP synthase [glutamine-hydrolyzing] subunit B (guaAB) from Pyrococcus abyssi (strain GE5 / Orsay).